Reading from the N-terminus, the 673-residue chain is ATP-dependent DNA helicase Rep (673 aa).

Residues 1–280 (MRLNPGQQQA…IKLEQNYRSS (280 aa)) form the UvrD-like helicase ATP-binding domain. Residues 22 to 29 (AGAGSGKT) and R278 contribute to the ATP site. Positions 281–562 (GRILKAANIL…QLMTLHASKG (282 aa)) constitute a UvrD-like helicase C-terminal domain.

It belongs to the helicase family. UvrD subfamily. Homodimer in association with DNA.

The enzyme catalyses Couples ATP hydrolysis with the unwinding of duplex DNA by translocating in the 3'-5' direction.. It carries out the reaction ATP + H2O = ADP + phosphate + H(+). Its activity is regulated as follows. Binding to DNA induces dimerization, which is required for DNA helicase activity. Helicase activity is stimulated by PriC. Rep helicase is a single-stranded (ss)DNA-dependent ATPase involved in DNA replication; it can initiate unwinding at a nick in the DNA. It binds to ssDNA and acts in a progressive fashion along the DNA in the 3' to 5' direction. Binds double-stranded (ds)DNA with a 5' ss- but not 3' ss-extension and forked structures with either lagging or leading ssDNA. Part of the PriC-Rep pathway for restart of stalled replication forks, which reloads the DnaB replicative helicase on sites other than the origin of replication. This is ATP-dependent DNA helicase Rep from Escherichia coli (strain K12).